A 142-amino-acid polypeptide reads, in one-letter code: Large ribosomal subunit protein uL16 (142 aa).

The segment covering 1–14 (MLSPRRTKFRKQQR) has biased composition (basic residues). The disordered stretch occupies residues 1–22 (MLSPRRTKFRKQQRGRMTGKAT).

Belongs to the universal ribosomal protein uL16 family. In terms of assembly, part of the 50S ribosomal subunit.

Binds 23S rRNA and is also seen to make contacts with the A and possibly P site tRNAs. In Synechococcus elongatus (strain ATCC 33912 / PCC 7942 / FACHB-805) (Anacystis nidulans R2), this protein is Large ribosomal subunit protein uL16.